We begin with the raw amino-acid sequence, 412 residues long: NF-kappa-B essential modulator (412 aa).

A disordered region spans residues 1–48 (MSRHLWKNQLSEMVQPSGGPAEDQDMLGEESSLGKPAMLHLPSEQGTP). A required for interaction with and ubiquitination by MARCHF2 region spans residues 1 to 197 (MSRHLWKNQL…REVLQQQHSV (197 aa)). 2 positions are modified to phosphoserine; by IKKB: Ser-31 and Ser-43. Residues 44-111 (EQGTPETLQR…KLVERLSLEK (68 aa)) are interaction with CHUK/IKBKB. Residues 49–343 (ETLQRCLEEN…NKLKVGCHES (295 aa)) are a coiled coil. Phosphoserine is present on Ser-68. Phosphoserine; by ATM is present on Ser-85. Glycyl lysine isopeptide (Lys-Gly) (interchain with G-Cter in ubiquitin) cross-links involve residues Lys-111, Lys-139, Lys-143, Lys-226, and Lys-246. Residues 150–250 (LGELQESQSR…YDSHIKSSKG (101 aa)) are interaction with TANK. The tract at residues 242-343 (DSHIKSSKGM…NKLKVGCHES (102 aa)) is ubiquitin-binding (UBAN). Positions 246 to 358 (KSSKGMQLED…MRKRHVETSQ (113 aa)) are self-association. The required for interaction with TNFAIP3 stretch occupies residues 249–412 (KGMQLEDLRQ…LQIHVMECIE (164 aa)). Residue Lys-270 forms a Glycyl lysine isopeptide (Lys-Gly) (interchain with G-Cter in SUMO); alternate linkage. Lys-270 participates in a covalent cross-link: Glycyl lysine isopeptide (Lys-Gly) (interchain with G-Cter in ubiquitin); alternate. Residues Lys-276, Lys-278, Lys-285, and Lys-295 each participate in a glycyl lysine isopeptide (Lys-Gly) (interchain with G-Cter in ubiquitin) cross-link. Lys-302 participates in a covalent cross-link: Glycyl lysine isopeptide (Lys-Gly) (interchain with G-Cter in SUMO); alternate. A Glycyl lysine isopeptide (Lys-Gly) (interchain with G-Cter in ubiquitin); alternate cross-link involves residue Lys-302. Glycyl lysine isopeptide (Lys-Gly) (interchain with G-Cter in ubiquitin) cross-links involve residues Lys-314 and Lys-319. The interval 315–336 (LVERKELLQEQLEQLQREFNKL) is leucine-zipper. Ser-369 bears the Phosphoserine; by IKKB mark. Residues 375–412 (SNQRRSPPEEPPDFCCPKCQYQAPDMDTLQIHVMECIE) are interaction with CYLD. Residue Ser-380 is modified to Phosphoserine. The CCHC NOA-type zinc-finger motif lies at 382 to 412 (PEEPPDFCCPKCQYQAPDMDTLQIHVMECIE). Position 390 (Cys-390) interacts with Zn(2+). Lys-392 participates in a covalent cross-link: Glycyl lysine isopeptide (Lys-Gly) (interchain with G-Cter in ubiquitin). Residues Cys-393, His-406, and Cys-410 each coordinate Zn(2+).

As to quaternary structure, homodimer; disulfide-linked. Component of the I-kappa-B-kinase (IKK) core complex consisting of CHUK, IKBKB and IKBKG; probably four alpha/CHUK-beta/IKBKB dimers are associated with four gamma/IKBKG subunits. The IKK core complex seems to associate with regulatory or adapter proteins to form a IKK-signalosome holo-complex. The IKK complex associates with TERF2IP/RAP1, leading to promote IKK-mediated phosphorylation of RELA/p65. Part of a complex composed of NCOA2, NCOA3, CHUK/IKKA, IKBKB, IKBKG and CREBBP. Interacts with COPS3, CYLD, NALP2, TRPC4AP and PIDD1. Interacts with ATM; the complex is exported from the nucleus. Interacts with TRAF6. Interacts with IKBKE. Interacts with TANK; the interaction is enhanced by IKBKE and TBK1. Part of a ternary complex consisting of TANK, IKBKB and IKBKG. Interacts with ZFAND5. Interacts with RIPK2. Interacts with TNIP1 and TNFAIP3; TNIP1 facilitates the TNFAIP3-mediated de-ubiquitination of IKBKG. Interacts with TNFAIP3; the interaction is induced by TNF stimulation and by polyubiquitin. Binds (via UBAN region) polyubiquitin; binds both 'Lys-63'-linked and linear polyubiquitin, with higher affinity for linear ubiquitin. Interacts with NLRP10. Interacts with TANK; this interaction increases in response to DNA damage. Interacts with USP10; this interaction increases in response to DNA damage. Interacts with ZC3H12A; this interaction increases in response to DNA damage. Interacts with IFIT5; the interaction synergizes the recruitment of IKK to MAP3K7 and enhances IKK phosphorylation. Interacts with TRIM29; this interaction induces IKBKG/NEMO ubiquitination and proteolytic degradation. Interacts with TRIM13; this interaction leads to IKBKG/NEMO ubiquitination. Interacts with ARFIP2. Interacts with RIPK1. Interacts with (ubiquitinated) BCL10; interaction with polyubiquitinated BCL10 via both 'Lys-63'-linked and linear ubiquitin is required for TCR-induced NF-kappa-B activation. Interacts with MARCHF2; during the late stages of macrophage viral and bacterial infection; the interaction leads to ubiquitination and degradation of IKBKG/NEMO. Phosphorylation at Ser-68 attenuates aminoterminal homodimerization. Post-translationally, polyubiquitinated on Lys-278 via 'Lys-63'-linked ubiquitin; the ubiquitination is mediated downstream of NOD2 and RIPK2 and probably plays a role in signaling by facilitating interactions with ubiquitin domain-containing proteins and activates the NF-kappa-B pathway. Polyubiquitinated on Lys-278 and Lys-302 through 'Lys-63'-linked ubiquitin; the ubiquitination is mediated by BCL10, MALT1 and TRAF6 and probably plays a role in signaling by facilitating interactions with ubiquitin domain-containing proteins and activates the NF-kappa-B pathway. Monoubiquitinated on Lys-270 and Lys-302; promotes nuclear export. Polyubiquitinated through 'Lys-27' by TRIM23; involved in antiviral innate and inflammatory responses. Linear polyubiquitinated on Lys-111, Lys-143, Lys-226, Lys-246, Lys-270, Lys-278, Lys-285, Lys-295, Lys-302 and Lys-319; the head-to-tail polyubiquitination is mediated by the LUBAC complex and plays a key role in NF-kappa-B activation. Deubiquitinated by USP10 in a TANK-dependent and -independent manner, leading to the negative regulation of NF-kappa-B signaling upon DNA damage. Ubiquitinated at Lys-319 by MARCHF2 following bacterial and viral infection which leads to its degradation. Polyubiquitinated via 'Lys-29'-linked ubiquitin; leading to lysosomal degradation. In terms of processing, sumoylated on Lys-270 and Lys-302 with SUMO1; the modification results in phosphorylation of Ser-85 by ATM leading to a replacement of the sumoylation by mono-ubiquitination on these residues. Neddylated by TRIM40, resulting in stabilization of NFKBIA and down-regulation of NF-kappa-B activity.

The protein localises to the cytoplasm. It localises to the nucleus. Regulatory subunit of the IKK core complex which phosphorylates inhibitors of NF-kappa-B thus leading to the dissociation of the inhibitor/NF-kappa-B complex and ultimately the degradation of the inhibitor. Its binding to scaffolding polyubiquitin plays a key role in IKK activation by multiple signaling receptor pathways. Can recognize and bind both 'Lys-63'-linked and linear polyubiquitin upon cell stimulation, with a much highr affinity for linear polyubiquitin. Could be implicated in NF-kappa-B-mediated protection from cytokine toxicity. Essential for viral activation of IRF3. Involved in TLR3- and IFIH1-mediated antiviral innate response; this function requires 'Lys-27'-linked polyubiquitination. In Rattus norvegicus (Rat), this protein is NF-kappa-B essential modulator (Ikbkg).